A 556-amino-acid polypeptide reads, in one-letter code: Formate--tetrahydrofolate ligase (556 aa).

65 to 72 (TPAGEGKS) contacts ATP.

This sequence belongs to the formate--tetrahydrofolate ligase family.

It catalyses the reaction (6S)-5,6,7,8-tetrahydrofolate + formate + ATP = (6R)-10-formyltetrahydrofolate + ADP + phosphate. It participates in one-carbon metabolism; tetrahydrofolate interconversion. In Streptococcus agalactiae serotype Ia (strain ATCC 27591 / A909 / CDC SS700), this protein is Formate--tetrahydrofolate ligase.